The sequence spans 452 residues: Pup--protein ligase (452 aa).

Residue Glu-9 participates in Mg(2+) binding. Residue Arg-53 coordinates ATP. Tyr-55 serves as a coordination point for Mg(2+). Asp-57 functions as the Proton acceptor in the catalytic mechanism. Residue Glu-63 participates in Mg(2+) binding. Positions 66 and 419 each coordinate ATP.

The protein belongs to the Pup ligase/Pup deamidase family. Pup-conjugating enzyme subfamily.

The catalysed reaction is ATP + [prokaryotic ubiquitin-like protein]-L-glutamate + [protein]-L-lysine = ADP + phosphate + N(6)-([prokaryotic ubiquitin-like protein]-gamma-L-glutamyl)-[protein]-L-lysine.. It functions in the pathway protein degradation; proteasomal Pup-dependent pathway. Its pathway is protein modification; protein pupylation. Its function is as follows. Catalyzes the covalent attachment of the prokaryotic ubiquitin-like protein modifier Pup to the proteasomal substrate proteins, thereby targeting them for proteasomal degradation. This tagging system is termed pupylation. The ligation reaction involves the side-chain carboxylate of the C-terminal glutamate of Pup and the side-chain amino group of a substrate lysine. This is Pup--protein ligase from Gordonia bronchialis (strain ATCC 25592 / DSM 43247 / BCRC 13721 / JCM 3198 / KCTC 3076 / NBRC 16047 / NCTC 10667) (Rhodococcus bronchialis).